A 258-amino-acid chain; its full sequence is Neurotrophin-3 (258 aa).

Residues 1–18 (MSILFYVIFLAYLRGIQG) form the signal peptide. Residues 19–139 (NSMDQRSLPE…ANRTSPRRKR (121 aa)) constitute a propeptide that is removed on maturation. The tract at residues 60-85 (QSTLPKAEAPREPEQGEATRSEFQPM) is disordered. Over residues 67–79 (EAPREPEQGEATR) the composition is skewed to basic and acidic residues. Asn131 carries N-linked (GlcNAc...) asparagine glycosylation. 3 disulfide bridges follow: Cys153–Cys218, Cys196–Cys247, and Cys206–Cys249.

It belongs to the NGF-beta family. As to expression, brain and peripheral tissues.

It localises to the secreted. Seems to promote the survival of visceral and proprioceptive sensory neurons. The protein is Neurotrophin-3 (Ntf3) of Mus musculus (Mouse).